Reading from the N-terminus, the 573-residue chain is Putative cytochrome c oxidase subunit 1-beta (573 aa).

The helical transmembrane segment at 53 to 73 threads the bilayer; it reads VIGHLYLATSFGFFLLGGVLA. Position 100 (H100) interacts with Fe(II)-heme a. 6 helical membrane-spanning segments follow: residues 103–123, 141–161, 188–208, 227–247, 272–292, and 304–324; these read IMML…IMPL, WMYL…GGAA, GLVV…STII, ILFT…ALLM, LFWF…FGIV, and IFGY…SAVV. 2 residues coordinate Cu cation: H278 and Y282. The segment at residues 278-282 is a cross-link (1'-histidyl-3'-tyrosine (His-Tyr)); the sequence is HPEVY. Cu cation contacts are provided by H327 and H328. 2 helical membrane-spanning segments follow: residues 329-349 and 373-393; these read MFAT…LIAV and MLWA…GVLI. H411 contributes to the heme a3 binding site. The next 3 helical transmembrane spans lie at 412 to 432, 447 to 467, and 490 to 510; these read LHYV…YFWW, IHFW…HWLG, and ISSI…YNVW. H413 contacts Fe(II)-heme a.

The protein belongs to the heme-copper respiratory oxidase family. As to quaternary structure, associates with subunits II, III and IV to form cytochrome c oxidase. Cu(2+) is required as a cofactor. Heme serves as cofactor.

It localises to the cell membrane. It carries out the reaction 4 Fe(II)-[cytochrome c] + O2 + 8 H(+)(in) = 4 Fe(III)-[cytochrome c] + 2 H2O + 4 H(+)(out). It participates in energy metabolism; oxidative phosphorylation. Its function is as follows. Cytochrome c oxidase is the component of the respiratory chain that catalyzes the reduction of oxygen to water. Subunits 1-3 form the functional core of the enzyme complex. CO I is the catalytic subunit of the enzyme. Electrons originating in cytochrome c are transferred via the copper A center of subunit 2 and heme A of subunit 1 to the bimetallic center formed by heme A3 and copper B. The polypeptide is Putative cytochrome c oxidase subunit 1-beta (ctaD2) (Streptomyces coelicolor (strain ATCC BAA-471 / A3(2) / M145)).